A 270-amino-acid chain; its full sequence is MDERPVLFFDSGIGGLTVLREVRSLIPEKQFIYVADDVGFPYGNWEENVLKNRILKIFTNLLTVYNPALCVIACNTVSTLMIADLRERFPHILFVGTVPAIKLAAEQTKSGFISVLATPGTVKRTYTHELINSFAGQCHVQLVGSEKLAGFAENYLRGQSVDLEELRNEILPCFVKKNGKHTDIIVLACTHYPFLLHFFREQALWHVQWIDPSKAIAKRTRSLLPQRIHHQTVKKYEDFALFTSQNITSSTKRLLKEFSLNITKGVDFKV.

Residues 10 to 11 and 42 to 43 contribute to the substrate site; these read DS and YG. Cysteine 74 (proton donor/acceptor) is an active-site residue. 75 to 76 is a binding site for substrate; sequence NT. Residue cysteine 189 is the Proton donor/acceptor of the active site. 190 to 191 contacts substrate; it reads TH.

Belongs to the aspartate/glutamate racemases family.

It catalyses the reaction L-glutamate = D-glutamate. The protein operates within cell wall biogenesis; peptidoglycan biosynthesis. Functionally, provides the (R)-glutamate required for cell wall biosynthesis. In Bartonella henselae (strain ATCC 49882 / DSM 28221 / CCUG 30454 / Houston 1) (Rochalimaea henselae), this protein is Glutamate racemase.